The sequence spans 473 residues: Serine palmitoyltransferase 1 (473 aa).

The Lumenal portion of the chain corresponds to 1 to 15 (MAMAAEQWVLVEMVQ). The interaction with SPTLC2 stretch occupies residues 1–66 (MAMAAEQWVL…KEELIEEWQP (66 aa)). Residues 16-36 (ALYEAPAYHLILEGILILWII) traverse the membrane as a helical segment. At 37 to 473 (RLVFSKTYKL…IREAAQAVLL (437 aa)) the chain is on the cytoplasmic side. Tyrosine 164 carries the post-translational modification Phosphotyrosine; by ABL.

It belongs to the class-II pyridoxal-phosphate-dependent aminotransferase family. In terms of assembly, component of the serine palmitoyltransferase (SPT) complex, which is also composed of SPTLC2 or SPTLC3 and SPTSSA or SPTSSB. The heterodimer with SPTLC2 or SPTLC3 forms the catalytic core of the enzyme, while SPTSSA or SPTSSB subunits determine substrate specificity. SPT also interacts with ORMDL proteins, especially ORMDL3, which negatively regulate SPT activity in the presence of ceramides. Forms dimers of heterodimers with SPTLC2. Interacts with RTN4. Pyridoxal 5'-phosphate serves as cofactor. Phosphorylation at Tyr-164 inhibits activity and promotes cell survival.

It is found in the endoplasmic reticulum membrane. It carries out the reaction L-serine + hexadecanoyl-CoA + H(+) = 3-oxosphinganine + CO2 + CoA. It catalyses the reaction octadecanoyl-CoA + L-serine + H(+) = 3-oxoeicosasphinganine + CO2 + CoA. The enzyme catalyses tetradecanoyl-CoA + L-serine + H(+) = 3-oxohexadecasphinganine + CO2 + CoA. The catalysed reaction is dodecanoyl-CoA + L-serine + H(+) = 3-oxotetradecasphinganine + CO2 + CoA. It participates in lipid metabolism; sphingolipid metabolism. Its activity is regulated as follows. SPT complex catalytic activity is negatively regulated by ORMDL proteins, including ORMDL3, in the presence of ceramides. This mechanism allows to maintain ceramide levels at sufficient concentrations for the production of complex sphingolipids, but which prevents the accumulation of ceramides to levels that trigger apoptosis. Its function is as follows. Component of the serine palmitoyltransferase multisubunit enzyme (SPT) that catalyzes the initial and rate-limiting step in sphingolipid biosynthesis by condensing L-serine and activated acyl-CoA (most commonly palmitoyl-CoA) to form long-chain bases. The SPT complex is also composed of SPTLC2 or SPTLC3 and SPTSSA or SPTSSB. Within this complex, the heterodimer with SPTLC2 or SPTLC3 forms the catalytic core. The composition of the serine palmitoyltransferase (SPT) complex determines the substrate preference. The SPTLC1-SPTLC2-SPTSSA complex shows a strong preference for C16-CoA substrate, while the SPTLC1-SPTLC3-SPTSSA isozyme uses both C14-CoA and C16-CoA as substrates, with a slight preference for C14-CoA. The SPTLC1-SPTLC2-SPTSSB complex shows a strong preference for C18-CoA substrate, while the SPTLC1-SPTLC3-SPTSSB isozyme displays an ability to use a broader range of acyl-CoAs, without apparent preference. Required for adipocyte cell viability and metabolic homeostasis. In Cricetulus griseus (Chinese hamster), this protein is Serine palmitoyltransferase 1 (SPTLC1).